Consider the following 111-residue polypeptide: Small ribosomal subunit protein uS17 (111 aa).

The protein belongs to the universal ribosomal protein uS17 family. As to quaternary structure, part of the 30S ribosomal subunit.

Functionally, one of the primary rRNA binding proteins, it binds specifically to the 5'-end of 16S ribosomal RNA. The polypeptide is Small ribosomal subunit protein uS17 (Archaeoglobus fulgidus (strain ATCC 49558 / DSM 4304 / JCM 9628 / NBRC 100126 / VC-16)).